Reading from the N-terminus, the 453-residue chain is Beta-agarase AgaB34 (453 aa).

The signal sequence occupies residues 1 to 23 (MKGFTKHSILMACSIGLAINATA). The GH16 domain maps to 24-301 (ADWDNIPIPA…WIRVYKPTGG (278 aa)). Glu147 (nucleophile) is an active-site residue. Glu152 acts as the Proton donor in catalysis. A Ricin B-type lectin domain is found at 313–453 (PSGYTNLQLA…GATNQRFKFL (141 aa)). Disulfide bonds link Cys327–Cys346, Cys375–Cys394, and Cys423–Cys442.

The protein belongs to the glycosyl hydrolase 16 family.

The protein resides in the secreted. The catalysed reaction is Hydrolysis of (1-&gt;4)-beta-D-galactosidic linkages in agarose, giving the tetramer as the predominant product.. This is Beta-agarase AgaB34 from Agarivorans albus.